A 1889-amino-acid polypeptide reads, in one-letter code: Bromodomain adjacent to zinc finger domain protein 2A (1889 aa).

Disordered regions lie at residues 1–59 (MEME…NGLS), 384–433 (FGLN…SPAA), and 479–526 (TTPV…GAVA). Residues 35–59 (TNGSPMNFPQQGKSLNGDVNVNGLS) are compositionally biased toward polar residues. Positions 332–726 (EGNPVISALD…ESQTPVQGQA (395 aa)) are required for TTF1 binding. Positions 423–433 (PAVSPTASPAA) are enriched in low complexity. Composition is skewed to polar residues over residues 479-489 (TTPVTSPQGSP) and 498-509 (QTVSPARKNVSS). The residue at position 499 (Thr-499) is a Phosphothreonine. Ser-501 is subject to Phosphoserine. The MBD domain occupies 538–609 (IATPEEVRLP…EHFSFSPRMP (72 aa)). At Thr-540 the chain carries Phosphothreonine. At Ser-605 the chain carries Phosphoserine. Positions 638-791 (QAITGKRGRP…ARPSCRADKT (154 aa)) are disordered. DNA-binding regions (a.T hook) lie at residues 641–653 (TGKR…NEKA) and 662–674 (KRGR…IKMP). The segment covering 648–660 (RNNEKAKNKEVPK) has biased composition (basic and acidic residues). Over residues 661 to 670 (VKRGRGRPPK) the composition is skewed to basic residues. Residue Lys-672 is modified to N6-acetyllysine; by KAT8. Residues 678-701 (NKTDNRLPKKLETQEILSEDDKAK) show a composition bias toward basic and acidic residues. Positions 686 to 813 (KKLETQEILS…QQAILEEMKK (128 aa)) form a coiled coil. Residues 702 to 713 (MTKNKKKMRQKV) show a composition bias toward basic residues. The span at 716-726 (GESQTPVQGQA) shows a compositional bias: polar residues. 2 stretches are compositionally biased toward basic and acidic residues: residues 731–740 (KQDTKSLKQK) and 748–791 (AEKE…ADKT). Lys-790 carries the N6-acetyllysine modification. In terms of domain architecture, DDT spans 839–904 (SRAFSDCLTI…LKAALHDPGL (66 aa)). A Glycyl lysine isopeptide (Lys-Gly) (interchain with G-Cter in SUMO2) cross-link involves residue Lys-857. The disordered stretch occupies residues 1039–1063 (EETSGIEEEEEEENTTAVHGRRGRK). Ser-1042 carries the post-translational modification Phosphoserine. The span at 1042-1052 (SGIEEEEEEEN) shows a compositional bias: acidic residues. Residues Lys-1141 and Lys-1163 each participate in a glycyl lysine isopeptide (Lys-Gly) (interchain with G-Cter in SUMO2) cross-link. Disordered regions lie at residues 1147–1247 (LMEV…GQSQ) and 1269–1397 (LSSS…GRPP). At Ser-1174 the chain carries Phosphoserine. Residues 1176–1188 (ARSRGRPRKPKPG) constitute a DNA-binding region (a.T hook 3). 3 stretches are compositionally biased toward polar residues: residues 1190 to 1231 (LQPQ…QPSS), 1269 to 1278 (LSSSVLTPDS), and 1331 to 1346 (DQPT…SKPM). Ser-1374, Ser-1377, and Ser-1383 each carry phosphoserine. The segment at residues 1390–1402 (PKRRGRPPSKFFK) is a DNA-binding region (a.T hook 4). The residue at position 1545 (Ser-1545) is a Phosphoserine. Glycyl lysine isopeptide (Lys-Gly) (interchain with G-Cter in SUMO2) cross-links involve residues Lys-1662 and Lys-1695. The PHD-type zinc finger occupies 1662–1712 (KVTCLVCRKGDNDEFLLLCDGCDRGCHIYCHRPKMEAVPEGDWFCAVCLSQ). The tract at residues 1720–1778 (QRPGFPKRGQKRKSSFPLTFPEGDSRRRMLSRSRDSPAVPRYPEDGLSPPKRRRHSMRS) is disordered. Ser-1733 bears the Phosphoserine mark. Thr-1738 is subject to Phosphothreonine. Residues 1742-1754 (GDSRRRMLSRSRD) are compositionally biased toward basic and acidic residues. Residues Ser-1755 and Ser-1767 each carry the phosphoserine modification. Residues 1769–1778 (PKRRRHSMRS) are compositionally biased toward basic residues. The 105-residue stretch at 1777-1881 (RSHHSDLTFC…RFFESRWEEF (105 aa)) folds into the Bromo domain.

Belongs to the WAL family. In terms of assembly, component of the NoRC-1 ISWI chromatin remodeling complex at least composed of SMARCA1 and BAZ2A/TIP5, which regulates the spacing of histone octamers on the DNA template to facilitate access to DNA. Within the NoRC-1 ISWI chromatin remodeling complex interacts with SMARCA1; the interaction is direct. Component of the NoRC-5 ISWI chromatin remodeling complex (also called the NoRC nucleolar-remodeling complex), at least composed of SMARCA5/SNF2H and BAZ2A/TIP5, which regulates the spacing of histone octamers on the DNA template to facilitate access to DNA. Within the NoRC-5 ISWI chromatin remodeling complexes interacts with SMARCA5/SNF2H; the interaction is direct. Interacts with TTF1; the interaction is required for recruitment of the NoRC-5 ISWI chromatin remodeling complex to rDNA. Interacts with HDAC1. Interacts with SIN3A. Interacts with DNMT1 and DNM3B. Interacts with BEND3 and USP21. Post-translationally, ubiquitinated. Deubiquitinated by USP21 leading to its stabilization. Acetylation at Lys-672 by KAT8/MOF promotes its dissociation from pRNA, affecting heterochromatin formation, nucleosome positioning and rDNA silencing. Deacetylation by SIRT1 in late S phase enhances pRNA-binding, allowing de novo DNA methylation and heterochromatin formation. Acetylation is high during S phase and declines to background levels in late S phase when the silent copies of rRNA genes are replicated.

It is found in the nucleus. The protein localises to the nucleolus. Functionally, regulatory subunit of the ATP-dependent NoRC-1 and NoRC-5 ISWI chromatin remodeling complexes, which form ordered nucleosome arrays on chromatin and facilitate access to DNA during DNA-templated processes such as DNA replication, transcription, and repair. Both complexes regulate the spacing of nucleosomes along the chromatin and have the ability to slide mononucleosomes to the center of a DNA template. Directly stimulates the ATPase activity of SMARCA5 in the NoRC-5 ISWI chromatin remodeling complex. The NoRC-1 ISWI chromatin remodeling complex has a lower ATP hydrolysis rate than the NoRC-5 ISWI chromatin remodeling complex. Within the NoRC-5 ISWI chromatin remodeling complex, mediates silencing of a fraction of rDNA by recruiting histone-modifying enzymes and DNA methyltransferases, leading to heterochromatin formation and transcriptional silencing. In the complex, it plays a central role by being recruited to rDNA and by targeting chromatin modifying enzymes such as HDAC1, leading to repress RNA polymerase I transcription. Recruited to rDNA via its interaction with TTF1 and its ability to recognize and bind histone H4 acetylated on 'Lys-16' (H4K16ac), leading to deacetylation of H4K5ac, H4K8ac, H4K12ac but not H4K16ac. Specifically binds pRNAs, 150-250 nucleotide RNAs that are complementary in sequence to the rDNA promoter; pRNA-binding is required for heterochromatin formation and rDNA silencing. In Mus musculus (Mouse), this protein is Bromodomain adjacent to zinc finger domain protein 2A (Baz2a).